Here is a 443-residue protein sequence, read N- to C-terminus: Serine/threonine-protein kinase ISR1 (443 aa).

The Protein kinase domain occupies 135–415 (LPSNKLVGQG…LRNDLFQDWK (281 aa)). Residues 141–149 (VGQGSYSYV) and K169 each bind ATP. D280 serves as the catalytic Proton acceptor.

Belongs to the protein kinase superfamily. Ser/Thr protein kinase family.

The catalysed reaction is L-seryl-[protein] + ATP = O-phospho-L-seryl-[protein] + ADP + H(+). The enzyme catalyses L-threonyl-[protein] + ATP = O-phospho-L-threonyl-[protein] + ADP + H(+). In terms of biological role, probable serine/threonine protein kinase which may function redundantly with MPK1-independent branch of the PCK1 pathway that is presumed to be required for the tolerance to high temperatures and staurosporine. This is Serine/threonine-protein kinase ISR1 (ISR1) from Saccharomyces cerevisiae (strain ATCC 204508 / S288c) (Baker's yeast).